Reading from the N-terminus, the 217-residue chain is Imidazole glycerol phosphate synthase subunit HisH (217 aa).

A Glutamine amidotransferase type-1 domain is found at 3–217 (TIAIVDYGVG…LYRNFVHWNP (215 aa)). Cys-82 serves as the catalytic Nucleophile. Active-site residues include His-197 and Glu-199.

As to quaternary structure, heterodimer of HisH and HisF.

The protein resides in the cytoplasm. It catalyses the reaction 5-[(5-phospho-1-deoxy-D-ribulos-1-ylimino)methylamino]-1-(5-phospho-beta-D-ribosyl)imidazole-4-carboxamide + L-glutamine = D-erythro-1-(imidazol-4-yl)glycerol 3-phosphate + 5-amino-1-(5-phospho-beta-D-ribosyl)imidazole-4-carboxamide + L-glutamate + H(+). The enzyme catalyses L-glutamine + H2O = L-glutamate + NH4(+). It participates in amino-acid biosynthesis; L-histidine biosynthesis; L-histidine from 5-phospho-alpha-D-ribose 1-diphosphate: step 5/9. In terms of biological role, IGPS catalyzes the conversion of PRFAR and glutamine to IGP, AICAR and glutamate. The HisH subunit catalyzes the hydrolysis of glutamine to glutamate and ammonia as part of the synthesis of IGP and AICAR. The resulting ammonia molecule is channeled to the active site of HisF. The polypeptide is Imidazole glycerol phosphate synthase subunit HisH (Cupriavidus pinatubonensis (strain JMP 134 / LMG 1197) (Cupriavidus necator (strain JMP 134))).